A 697-amino-acid polypeptide reads, in one-letter code: Colicin-D (697 aa).

The short motif at 17-24 (HSMVVWPS) is the TonB box element.

It belongs to the cloacin colicin family.

In terms of biological role, colicins are polypeptide toxins produced by and active against E.coli and closely related bacteria. Colicin D inhibits protein synthesis. This is Colicin-D (cda) from Escherichia coli.